The sequence spans 350 residues: GTPase Obg (350 aa).

One can recognise an Obg domain in the interval 1-159 (MKFLDQAKIY…RWIWLRLKLI (159 aa)). The 169-residue stretch at 160–328 (ADVGLVGLPN…VLRLLQDRVT (169 aa)) folds into the OBG-type G domain. GTP is bound by residues 166 to 173 (GLPNAGKS), 191 to 195 (FTTLH), 213 to 216 (DIPG), 280 to 283 (NKID), and 309 to 311 (SGV). The Mg(2+) site is built by S173 and T193. The segment at 331-350 (REAARDAAPPQAAAGREETA) is disordered.

Belongs to the TRAFAC class OBG-HflX-like GTPase superfamily. OBG GTPase family. In terms of assembly, monomer. The cofactor is Mg(2+).

Its subcellular location is the cytoplasm. Functionally, an essential GTPase which binds GTP, GDP and possibly (p)ppGpp with moderate affinity, with high nucleotide exchange rates and a fairly low GTP hydrolysis rate. Plays a role in control of the cell cycle, stress response, ribosome biogenesis and in those bacteria that undergo differentiation, in morphogenesis control. The sequence is that of GTPase Obg from Gluconacetobacter diazotrophicus (strain ATCC 49037 / DSM 5601 / CCUG 37298 / CIP 103539 / LMG 7603 / PAl5).